The following is a 263-amino-acid chain: Probable adenylate kinase 7, mitochondrial (263 aa).

A mitochondrion-targeting transit peptide spans 1-30 (MAWLSRVRGVSPVTRLAAIRRSFGSAAALE). 72-77 (GAWRHV) lines the ATP pocket. The segment at 92–121 (SMGSLVRQELNPRSSLYKEIASAVNERKLV) is NMP. AMP is bound by residues Arg98, 119–121 (KLV), 149–152 (GIPR), Gln156, and Arg206. Gly234 contacts ATP.

This sequence belongs to the adenylate kinase family. As to quaternary structure, monomer.

It localises to the mitochondrion. It carries out the reaction AMP + ATP = 2 ADP. Functionally, catalyzes the reversible transfer of the terminal phosphate group between ATP and AMP. Plays an important role in cellular energy homeostasis and in adenine nucleotide metabolism. The polypeptide is Probable adenylate kinase 7, mitochondrial (Arabidopsis thaliana (Mouse-ear cress)).